The primary structure comprises 282 residues: Putative 4-diphosphocytidyl-2-C-methyl-D-erythritol kinase (282 aa).

Lysine 9 is a catalytic residue. Residue 93 to 103 coordinates ATP; the sequence is PVSAGLAGGST. The active site involves aspartate 135.

This sequence belongs to the GHMP kinase family. IspE subfamily.

It carries out the reaction 4-CDP-2-C-methyl-D-erythritol + ATP = 4-CDP-2-C-methyl-D-erythritol 2-phosphate + ADP + H(+). Functionally, catalyzes the phosphorylation of the position 2 hydroxy group of 4-diphosphocytidyl-2C-methyl-D-erythritol. This is Putative 4-diphosphocytidyl-2-C-methyl-D-erythritol kinase from Staphylococcus saprophyticus subsp. saprophyticus (strain ATCC 15305 / DSM 20229 / NCIMB 8711 / NCTC 7292 / S-41).